A 431-amino-acid chain; its full sequence is Serine hydroxymethyltransferase (431 aa).

(6S)-5,6,7,8-tetrahydrofolate-binding positions include leucine 128 and 132–134; that span reads GHL. N6-(pyridoxal phosphate)lysine is present on lysine 237. Glutamate 253 lines the (6S)-5,6,7,8-tetrahydrofolate pocket.

It belongs to the SHMT family. In terms of assembly, homodimer. Pyridoxal 5'-phosphate serves as cofactor.

The protein localises to the cytoplasm. It catalyses the reaction (6R)-5,10-methylene-5,6,7,8-tetrahydrofolate + glycine + H2O = (6S)-5,6,7,8-tetrahydrofolate + L-serine. It participates in one-carbon metabolism; tetrahydrofolate interconversion. Its pathway is amino-acid biosynthesis; glycine biosynthesis; glycine from L-serine: step 1/1. Catalyzes the reversible interconversion of serine and glycine with tetrahydrofolate (THF) serving as the one-carbon carrier. This reaction serves as the major source of one-carbon groups required for the biosynthesis of purines, thymidylate, methionine, and other important biomolecules. Also exhibits THF-independent aldolase activity toward beta-hydroxyamino acids, producing glycine and aldehydes, via a retro-aldol mechanism. In Cereibacter sphaeroides (strain ATCC 17023 / DSM 158 / JCM 6121 / CCUG 31486 / LMG 2827 / NBRC 12203 / NCIMB 8253 / ATH 2.4.1.) (Rhodobacter sphaeroides), this protein is Serine hydroxymethyltransferase.